Consider the following 361-residue polypeptide: Chorismate synthase (361 aa).

An NADP(+)-binding site is contributed by Arg-47. FMN-binding positions include 124 to 126 (RAS), Gly-286, 301 to 305 (KPTAT), and Arg-327.

The protein belongs to the chorismate synthase family. Homotetramer. It depends on FMNH2 as a cofactor.

The catalysed reaction is 5-O-(1-carboxyvinyl)-3-phosphoshikimate = chorismate + phosphate. It participates in metabolic intermediate biosynthesis; chorismate biosynthesis; chorismate from D-erythrose 4-phosphate and phosphoenolpyruvate: step 7/7. Catalyzes the anti-1,4-elimination of the C-3 phosphate and the C-6 proR hydrogen from 5-enolpyruvylshikimate-3-phosphate (EPSP) to yield chorismate, which is the branch point compound that serves as the starting substrate for the three terminal pathways of aromatic amino acid biosynthesis. This reaction introduces a second double bond into the aromatic ring system. The polypeptide is Chorismate synthase (Akkermansia muciniphila (strain ATCC BAA-835 / DSM 22959 / JCM 33894 / BCRC 81048 / CCUG 64013 / CIP 107961 / Muc)).